Here is a 349-residue protein sequence, read N- to C-terminus: Quinolinate synthase (349 aa).

Positions 52 and 69 each coordinate iminosuccinate. A [4Fe-4S] cluster-binding site is contributed by cysteine 114. Residues 140 to 142 (YFN) and serine 157 each bind iminosuccinate. [4Fe-4S] cluster is bound at residue cysteine 201. Iminosuccinate contacts are provided by residues 227–229 (HPE) and threonine 255. Cysteine 300 lines the [4Fe-4S] cluster pocket.

The protein belongs to the quinolinate synthase family. Type 2 subfamily. It depends on [4Fe-4S] cluster as a cofactor.

It is found in the cytoplasm. The catalysed reaction is iminosuccinate + dihydroxyacetone phosphate = quinolinate + phosphate + 2 H2O + H(+). It functions in the pathway cofactor biosynthesis; NAD(+) biosynthesis; quinolinate from iminoaspartate: step 1/1. Catalyzes the condensation of iminoaspartate with dihydroxyacetone phosphate to form quinolinate. The polypeptide is Quinolinate synthase (Mycolicibacterium paratuberculosis (strain ATCC BAA-968 / K-10) (Mycobacterium paratuberculosis)).